A 258-amino-acid chain; its full sequence is NAD kinase (258 aa).

The Proton acceptor role is filled by aspartate 51. Residues aspartate 51–glycine 52, arginine 56, asparagine 119–aspartate 120, lysine 130, aspartate 149, threonine 160–serine 165, and alanine 184 each bind NAD(+).

It belongs to the NAD kinase family. A divalent metal cation serves as cofactor.

The protein resides in the cytoplasm. It catalyses the reaction NAD(+) + ATP = ADP + NADP(+) + H(+). In terms of biological role, involved in the regulation of the intracellular balance of NAD and NADP, and is a key enzyme in the biosynthesis of NADP. Catalyzes specifically the phosphorylation on 2'-hydroxyl of the adenosine moiety of NAD to yield NADP. This is NAD kinase from Thermotoga neapolitana (strain ATCC 49049 / DSM 4359 / NBRC 107923 / NS-E).